A 280-amino-acid chain; its full sequence is P32 adhesin (280 aa).

2 consecutive transmembrane segments (helical) span residues 13 to 37 (FIVL…ALVV) and 68 to 92 (WFIP…AIGL). Residues 114–128 (EQLQRISDQQEQQTV) are compositionally biased toward polar residues. 2 disordered regions span residues 114-149 (EQLQ…QPLQ) and 163-280 (FNPN…GLKP). Low complexity-rich tracts occupy residues 132–149 (PQQS…QPLQ) and 168–188 (QQRP…NFNP). 13 repeat units span residues 163–168 (FNPNMQ), 170–174 (RPGFN), 186–190 (FNPRM), 191–195 (NPNMQ), 196–200 (RPGFN), 199–204 (FNPNMQ), 206–210 (RPGFN), 222–226 (FNPRM), 227–231 (NPNMQ), 232–236 (RPGFN), 249–254 (FNPNMQ), 256–260 (RPGFN), and 259–264 (FNPNMQ). Residues 163–264 (FNPNMQQRPG…QRPGFNPNMQ (102 aa)) are 6 X 5 AA repeats of [FM]-N-P-N-M-Q. Residues 170–260 (RPGFNQPNQQ…PNMQQRPGFN (91 aa)) form a 5 X 5 AA repeats of R-P-G-F-N region. The segment at 186-226 (FNPRMNPNMQRPGFNPNMQQRPGFNQPNQQFQPHNNFNPRM) is 2 X 5 AA repeats of F-N-P-R-M. Over residues 204–224 (QQRPGFNQPNQQFQPHNNFNP) the composition is skewed to low complexity. Positions 235–257 (FNQPHPNQFAQPNNFNPNMQQRP) are enriched in low complexity. A compositionally biased stretch (polar residues) spans 261–271 (PNMQQRPNPSQ).

Its subcellular location is the cell projection. The protein localises to the attachment organelle membrane. In terms of biological role, adhesin necessary for successful cytadherence and virulence. This is P32 adhesin from Mycoplasma genitalium (strain ATCC 33530 / DSM 19775 / NCTC 10195 / G37) (Mycoplasmoides genitalium).